The sequence spans 218 residues: Protein GrpE (218 aa).

The tract at residues 1-75 is disordered; that stretch reads MTTPNGMPDN…DVDPDLDGDG (75 aa). Positions 23–40 are enriched in basic and acidic residues; sequence SADRAEQAAEEAAARQAE. Residues 48 to 75 are compositionally biased toward acidic residues; it reads SEEEISPELEAEINDLLSDVDPDLDGDG.

The protein belongs to the GrpE family. Homodimer.

Its subcellular location is the cytoplasm. In terms of biological role, participates actively in the response to hyperosmotic and heat shock by preventing the aggregation of stress-denatured proteins, in association with DnaK and GrpE. It is the nucleotide exchange factor for DnaK and may function as a thermosensor. Unfolded proteins bind initially to DnaJ; upon interaction with the DnaJ-bound protein, DnaK hydrolyzes its bound ATP, resulting in the formation of a stable complex. GrpE releases ADP from DnaK; ATP binding to DnaK triggers the release of the substrate protein, thus completing the reaction cycle. Several rounds of ATP-dependent interactions between DnaJ, DnaK and GrpE are required for fully efficient folding. The polypeptide is Protein GrpE (Corynebacterium glutamicum (strain ATCC 13032 / DSM 20300 / JCM 1318 / BCRC 11384 / CCUG 27702 / LMG 3730 / NBRC 12168 / NCIMB 10025 / NRRL B-2784 / 534)).